The following is a 556-amino-acid chain: Peptide chain release factor 3 (556 aa).

The tr-type G domain occupies 28-297; sequence QQRRNFAIIS…AFLDYALKPG (270 aa). GTP is bound by residues 37 to 44, 105 to 109, and 159 to 162; these read SHPDAGKT, DTPGH, and NKMD.

The protein belongs to the TRAFAC class translation factor GTPase superfamily. Classic translation factor GTPase family. PrfC subfamily.

It is found in the cytoplasm. Increases the formation of ribosomal termination complexes and stimulates activities of RF-1 and RF-2. It binds guanine nucleotides and has strong preference for UGA stop codons. It may interact directly with the ribosome. The stimulation of RF-1 and RF-2 is significantly reduced by GTP and GDP, but not by GMP. This Synechococcus elongatus (strain ATCC 33912 / PCC 7942 / FACHB-805) (Anacystis nidulans R2) protein is Peptide chain release factor 3.